The sequence spans 1224 residues: MLTKFETKSARVKGLSFHPKRPWILTSLHNGVIQLWDYRMCTLIDKFDEHDGPVRGIDFHKQQPLFVSGGDDYKIKVWNYKLRRCLFTLLGHLDYIRTTFFHHEYPWILSASDDQTIRVWNWQSRTCVCVLTGHNHYVMCAQFHPTEDLVVSASLDQTVRVWDISGLRKKNLSPGAVESDVRGITGVDLFGTTDAVVKHVLEGHDRGVNWAAFHPTMPLIVSGADDRQVKIWRMNESKAWEVDTCRGHYNNVSCAVFHPRQELILSNSEDKSIRVWDMSKRTGVQTFRRDHDRFWVLAAHPNLNLFAAGHDGGMIVFKLERERPAYAVHGNMLHYVKDRFLRQLDFNSSKDVAVMQLRSGSKFPVFNMSYNPAENAVLLCTRASNLENSTYDLYTIPKDADSQNPDAPEGKRSSGLTAVWVARNRFAVLDRMHSLLIKNLKNEITKKVQVPNCDEIFYAGTGNLLLRDADSITLFDVQQKRTLASVKISKVKYVIWSADMSHVALLAKHAIVICNRKLDALCNIHENIRVKSGAWDESGVFIYTTSNHIKYAVTTGDHGIIRTLDLPIYVTRVKGNNVYCLDRECRPRVLTIDPTEFKFKLALINRKYDEVLHMVRNAKLVGQSIIAYLQKKGYPEVALHFVKDEKTRFSLALECGNIEIALEAAKALDDKNCWEKLGEVALLQGNHQIVEMCYQRTKNFDKLSFLYLITGNLEKLRKMMKIAEIRKDMSGHYQNALYLGDVSERVRILKNCGQKSLAYLTAATHGLDEEAESLKETFDPEKETIPDIDPNAKLLQPPAPIMPLDTNWPLLTVSKGFFEGTIASKGKGGALAADIDIDTVGTEGWGEDAELQLDEDGFVEATEGLGDDALGKGQEEGGGWDVEEDLELPPELDISPGAAGGAEDGFFVPPTKGTSPTQIWCNNSQLPVDHILAGSFETAMRLLHDQVGVIQFGPYKQLFLQTYARGRTTYQALPCLPSMYGYPNRNWKDAGLKNGVPAVGLKLNDLIQRLQLCYQLTTVGKFEEAVEKFRSILLSVPLLVVDNKQEIAEAQQLITICREYIVGLSVETERKKLPKETLEQQKRICEMAAYFTHSNLQPVHMILVLRTALNLFFKLKNFKTAATFARRLLELGPKPEVAQQTRKILSACEKNPTDAYQLNYDMHNPFDICAASYRPIYRGKPVEKCPLSGACYSPEFKGQICRVTTVTEIGKDVIGLRISPLQFR.

4 WD repeats span residues 3–38 (TKFE…LWDY), 42–80 (TLID…VWNY), 84–122 (RCLF…VWNW), and 126–164 (TCVC…VWDI). At serine 173 the chain carries Phosphoserine. Threonine 185 bears the Phosphothreonine mark. WD repeat units follow at residues 195–234 (AVVK…IWRM), 241–278 (EVDT…VWDM), and 282–319 (TGVQ…VFKL). Serine 402 is subject to Phosphoserine. At threonine 591 the chain carries Phosphothreonine. Serine 895 carries the post-translational modification Phosphoserine. The residue at position 965 (arginine 965) is an Omega-N-methylarginine. Serine 1193 is modified (phosphoserine).

As to quaternary structure, oligomeric complex that consists of at least the alpha, beta, beta', gamma, delta, epsilon and zeta subunits. Interacts with SCYL1. Interacts with JAGN1. Interacts with TMEM41B. Interacts with SVEP1. Probably interacts with PEX11A. Uniformly expressed in a wide range of adult and fetal tissues. Xenin is found in gastric, duodenal and jejunal mucosa. Circulates in the blood. Seems to be confined to specific endocrine cells.

The protein localises to the cytoplasm. The protein resides in the golgi apparatus membrane. It is found in the cytoplasmic vesicle. Its subcellular location is the COPI-coated vesicle membrane. It localises to the secreted. Functionally, the coatomer is a cytosolic protein complex that binds to dilysine motifs and reversibly associates with Golgi non-clathrin-coated vesicles, which further mediate biosynthetic protein transport from the ER, via the Golgi up to the trans Golgi network. Coatomer complex is required for budding from Golgi membranes, and is essential for the retrograde Golgi-to-ER transport of dilysine-tagged proteins. In mammals, the coatomer can only be recruited by membranes associated to ADP-ribosylation factors (ARFs), which are small GTP-binding proteins; the complex also influences the Golgi structural integrity, as well as the processing, activity, and endocytic recycling of LDL receptors. In terms of biological role, xenin stimulates exocrine pancreatic secretion. It inhibits pentagastrin-stimulated secretion of acid, to induce exocrine pancreatic secretion and to affect small and large intestinal motility. In the gut, xenin interacts with the neurotensin receptor. In Homo sapiens (Human), this protein is Coatomer subunit alpha (COPA).